The sequence spans 157 residues: Lipoprotein signal peptidase (157 aa).

4 helical membrane passes run 10–30 (LVFM…KYAI), 38–58 (SLMV…LLSF), 59–79 (LEGG…IFLI), and 84–104 (LFKT…SNVL). Active-site residues include Asp-114 and Asp-131. A helical membrane pass occupies residues 122-142 (FDFAIFNFADVMIDVGVGVLL).

This sequence belongs to the peptidase A8 family.

The protein resides in the cell inner membrane. The catalysed reaction is Release of signal peptides from bacterial membrane prolipoproteins. Hydrolyzes -Xaa-Yaa-Zaa-|-(S,diacylglyceryl)Cys-, in which Xaa is hydrophobic (preferably Leu), and Yaa (Ala or Ser) and Zaa (Gly or Ala) have small, neutral side chains.. The protein operates within protein modification; lipoprotein biosynthesis (signal peptide cleavage). In terms of biological role, this protein specifically catalyzes the removal of signal peptides from prolipoproteins. This chain is Lipoprotein signal peptidase, found in Helicobacter pylori (strain HPAG1).